Consider the following 309-residue polypeptide: Enoyl-CoA hydratase 2, peroxisomal (309 aa).

Substrate contacts are provided by residues H95–G96, K124, D208–H213, G231, and F261. In terms of domain architecture, MaoC-like spans P183–V295. The Microbody targeting signal motif lies at S307–L309.

As to expression, ubiquitous.

It localises to the peroxisome. The catalysed reaction is a (3R)-3-hydroxyacyl-CoA = a (2E)-enoyl-CoA + H2O. Its pathway is lipid metabolism; fatty acid beta-oxidation. Its function is as follows. Bidirectional monofunctional enoyl-CoA hydratase 2 involved in the degradation of even cis-unsaturated fatty acids. Devoid of 3-hydroxyacyl-CoA dehydrogenase activity. The chain is Enoyl-CoA hydratase 2, peroxisomal (ECH2) from Arabidopsis thaliana (Mouse-ear cress).